The primary structure comprises 429 residues: Histidinol dehydrogenase (429 aa).

Residues Tyr-130, Gln-191, and Asn-214 each coordinate NAD(+). Positions 237, 259, and 262 each coordinate substrate. The Zn(2+) site is built by Gln-259 and His-262. Catalysis depends on proton acceptor residues Glu-327 and His-328. Residues His-328, Asp-361, Glu-415, and His-420 each contribute to the substrate site. Residue Asp-361 participates in Zn(2+) binding. Zn(2+) is bound at residue His-420.

It belongs to the histidinol dehydrogenase family. It depends on Zn(2+) as a cofactor.

It carries out the reaction L-histidinol + 2 NAD(+) + H2O = L-histidine + 2 NADH + 3 H(+). The protein operates within amino-acid biosynthesis; L-histidine biosynthesis; L-histidine from 5-phospho-alpha-D-ribose 1-diphosphate: step 9/9. Its function is as follows. Catalyzes the sequential NAD-dependent oxidations of L-histidinol to L-histidinaldehyde and then to L-histidine. This is Histidinol dehydrogenase from Geobacter sulfurreducens (strain ATCC 51573 / DSM 12127 / PCA).